Here is a 106-residue protein sequence, read N- to C-terminus: Urease subunit beta (106 aa).

It belongs to the urease beta subunit family. In terms of assembly, heterotrimer of UreA (gamma), UreB (beta) and UreC (alpha) subunits. Three heterotrimers associate to form the active enzyme.

Its subcellular location is the cytoplasm. The catalysed reaction is urea + 2 H2O + H(+) = hydrogencarbonate + 2 NH4(+). The protein operates within nitrogen metabolism; urea degradation; CO(2) and NH(3) from urea (urease route): step 1/1. The polypeptide is Urease subunit beta (Prochlorococcus marinus (strain MIT 9215)).